The chain runs to 84 residues: Tetrahydromethanopterin S-methyltransferase subunit G (84 aa).

Residues 50–70 traverse the membrane as a helical segment; the sequence is IGILYGLVIGIILSYILPALI.

This sequence belongs to the MtrG family. The complex is composed of 8 subunits; MtrA, MtrB, MtrC, MtrD, MtrE, MtrF, MtrG and MtrH.

Its subcellular location is the cell membrane. It catalyses the reaction 5-methyl-5,6,7,8-tetrahydromethanopterin + coenzyme M + 2 Na(+)(in) = 5,6,7,8-tetrahydromethanopterin + methyl-coenzyme M + 2 Na(+)(out). It participates in one-carbon metabolism; methanogenesis from CO(2); methyl-coenzyme M from 5,10-methylene-5,6,7,8-tetrahydromethanopterin: step 2/2. Functionally, part of a complex that catalyzes the formation of methyl-coenzyme M and tetrahydromethanopterin from coenzyme M and methyl-tetrahydromethanopterin. This is an energy-conserving, sodium-ion translocating step. The chain is Tetrahydromethanopterin S-methyltransferase subunit G from Methanocaldococcus jannaschii (strain ATCC 43067 / DSM 2661 / JAL-1 / JCM 10045 / NBRC 100440) (Methanococcus jannaschii).